The chain runs to 612 residues: MACPF domain-containing protein NSL1 (612 aa).

One can recognise an MACPF domain in the interval 5–338 (NFTRLDAHSA…PPIEELHQFL (334 aa)).

It belongs to the complement C6/C7/C8/C9 (TC 1.C.39) family.

Negatively controls the salicylic acid (SA)-mediated pathway of programmed cell death in plant immunity. The chain is MACPF domain-containing protein NSL1 (NSL1) from Arabidopsis thaliana (Mouse-ear cress).